Here is a 151-residue protein sequence, read N- to C-terminus: 6,7-dimethyl-8-ribityllumazine synthase (151 aa).

Residues Phe-15, 49–51 (AVE), and 73–75 (AVI) each bind 5-amino-6-(D-ribitylamino)uracil. 78–79 (ET) lines the (2S)-2-hydroxy-3-oxobutyl phosphate pocket. His-81 serves as the catalytic Proton donor. Position 106 (Phe-106) interacts with 5-amino-6-(D-ribitylamino)uracil. A (2S)-2-hydroxy-3-oxobutyl phosphate-binding site is contributed by Arg-120.

This sequence belongs to the DMRL synthase family. Forms an icosahedral capsid composed of 60 subunits, arranged as a dodecamer of pentamers.

The enzyme catalyses (2S)-2-hydroxy-3-oxobutyl phosphate + 5-amino-6-(D-ribitylamino)uracil = 6,7-dimethyl-8-(1-D-ribityl)lumazine + phosphate + 2 H2O + H(+). It functions in the pathway cofactor biosynthesis; riboflavin biosynthesis; riboflavin from 2-hydroxy-3-oxobutyl phosphate and 5-amino-6-(D-ribitylamino)uracil: step 1/2. Functionally, catalyzes the formation of 6,7-dimethyl-8-ribityllumazine by condensation of 5-amino-6-(D-ribitylamino)uracil with 3,4-dihydroxy-2-butanone 4-phosphate. This is the penultimate step in the biosynthesis of riboflavin. This chain is 6,7-dimethyl-8-ribityllumazine synthase, found in Coxiella burnetii (strain Dugway 5J108-111).